We begin with the raw amino-acid sequence, 1413 residues long: MKALLDLFKQVQQEEVFDAIKIGLASPDKIRSWSFGEVKKPETINYRTFKPERDGLFCAKIFGPIKDYECLCGKYKRLKHRGVICEKCGVEVTLAKVRRERMGHIELASPVAHIWFLKSLPSRLGMVLDMTLRDIERVLYFEAYVVIEPGMTPLKARQIMTEEDYYNKVEEYGDEFRAEMGAEGVRELLRAINIDEQVETLRTELKNTGSEAKIKKYAKRLKVLEAFQRSGIKPEWMILEVLPVLPPELRPLVPLDGGRFATSDLNDLYRRVINRNNRLKRLLELKAPEIIVRNEKRMLQEAVDSLLDNGRRGKAMTGANKRPLKSLADMIKGKGGRFRQNLLGKRVDYSGRSVIVVGPTLKLHQCGLPKLMALELFKPFIFNKLEVMGVATTIKAAKKEVENQTPVVWDILEEVIREHPVMLNRAPTLHRLGIQAFEPVLIEGKAIQLHPLVCAAFNADFDGDQMAVHVPLSLEAQMEARTLMLASNNVLFPANGDPSIVPSQDIVLGLYYATREAVNGKGEGLSFTGVSEVIRAYENKEVELASRVNVRITEMVHNEDKSEGAPPFVPKITLYATTVGRAILSEILPHGLPFSVLNKPLKKKEISRLINTAFRKCGLRATVVFADQLMQSGFRLATRAGISICVDDMLVPPQKETIVGDAAKKVKEYDRQYMSGLVTAQERYNNVVDIWSATSEAVGKAMMEQLSTEPVTDRDGNETRQESFNSIYMMADSGARGSAVQIRQLAGMRGLMAKPDGSIIETPITANFREGLNVLQYFISTHGARKGLADTALKTANSGYLTRRLVDVTQDLVVVEDDCGTSNGVAMKALVEGGEVVEALRDRILGRVAVADVVNPETQETLYESGTLLDETAVEEIERLGIDEVRVRTPLTCETRYGLCAACYGRDLGRGSLVNVGEAVGVIAAQSIGEPGTQLTMRTFHIGGAASRAAVASSVEAKSNGIVRFTATMRYVTNAKGEQIVISRSGEAMITDDFGRERERHKVPYGATLLQLDGATIKAGTQLATWDPLTRPIITEYGGTVKFENVEEGVTVAKQIDDVTGLSTLVVIDVKRRGSQASKSVRPQVKLLDANGEEVKIPGTEHAVQIGFQVGALITVKDGQQVQVGEVLARIPTEAQKTRDITGGLPRVAELFEARSPKDAGILAEVTGTTSFGKDTKGKQRLVITDLEGNQHEFLIAKEKQVLVHDAQVVNKGEMIVDGPADPHDILRLQGIEALSRYIVDEVQDVYRLQGVKINDKHIEVIVRQMLRRVQITDNGDTRFIPGEQVERSDMLDENDRMIAEGKRPASYDNVLLGITKASLSTDSFISAASFQETTRVLTEAAIMGKRDDLRGLKENVIVGRLIPAGTGLAFHKARKAKESSDRERFDQIAAEEAFDFGTPSAPAEEPQHPAAE.

Zn(2+)-binding residues include Cys70, Cys72, Cys85, and Cys88. Positions 460, 462, and 464 each coordinate Mg(2+). The Zn(2+) site is built by Cys819, Cys893, Cys900, and Cys903. The segment at 1392–1413 is disordered; it reads EEAFDFGTPSAPAEEPQHPAAE.

This sequence belongs to the RNA polymerase beta' chain family. As to quaternary structure, the RNAP catalytic core consists of 2 alpha, 1 beta, 1 beta' and 1 omega subunit. When a sigma factor is associated with the core the holoenzyme is formed, which can initiate transcription. Mg(2+) serves as cofactor. The cofactor is Zn(2+).

The enzyme catalyses RNA(n) + a ribonucleoside 5'-triphosphate = RNA(n+1) + diphosphate. Functionally, DNA-dependent RNA polymerase catalyzes the transcription of DNA into RNA using the four ribonucleoside triphosphates as substrates. This is DNA-directed RNA polymerase subunit beta' from Burkholderia orbicola (strain MC0-3).